Reading from the N-terminus, the 1580-residue chain is Pentafunctional AROM polypeptide (1580 aa).

Residues methionine 1–asparagine 381 are 3-dehydroquinate synthase. NAD(+)-binding positions include aspartate 44–threonine 46, glutamate 81–lysine 84, glycine 114–valine 116, and aspartate 119. Arginine 130 contacts 7-phospho-2-dehydro-3-deoxy-D-arabino-heptonate. Residue threonine 139 to threonine 140 coordinates NAD(+). 7-phospho-2-dehydro-3-deoxy-D-arabino-heptonate contacts are provided by aspartate 146 and lysine 152. Lysine 161 is an NAD(+) binding site. Position 162 (asparagine 162) interacts with 7-phospho-2-dehydro-3-deoxy-D-arabino-heptonate. NAD(+)-binding positions include phenylalanine 179–threonine 182 and asparagine 190. Glutamate 194 lines the Zn(2+) pocket. Lysine 247 is a binding site for 7-phospho-2-dehydro-3-deoxy-D-arabino-heptonate. The Proton acceptor; for 3-dehydroquinate synthase activity role is filled by glutamate 257. Residues arginine 261 to asparagine 265 and histidine 268 each bind 7-phospho-2-dehydro-3-deoxy-D-arabino-heptonate. Position 268 (histidine 268) interacts with Zn(2+). The active-site Proton acceptor; for 3-dehydroquinate synthase activity is histidine 272. Histidine 284 and lysine 353 together coordinate 7-phospho-2-dehydro-3-deoxy-D-arabino-heptonate. Histidine 284 lines the Zn(2+) pocket. The segment at valine 394 to alanine 838 is EPSP synthase. Cysteine 820 functions as the For EPSP synthase activity in the catalytic mechanism. The segment at alanine 857–serine 1048 is shikimate kinase. Glycine 863–threonine 870 is a binding site for ATP. The tract at residues leucine 1049 to glutamate 1269 is 3-dehydroquinase. The Proton acceptor; for 3-dehydroquinate dehydratase activity role is filled by histidine 1172. Residue lysine 1200 is the Schiff-base intermediate with substrate; for 3-dehydroquinate dehydratase activity of the active site. A shikimate dehydrogenase region spans residues serine 1282–isoleucine 1580.

It in the N-terminal section; belongs to the sugar phosphate cyclases superfamily. Dehydroquinate synthase family. This sequence in the 2nd section; belongs to the EPSP synthase family. In the 3rd section; belongs to the shikimate kinase family. The protein in the 4th section; belongs to the type-I 3-dehydroquinase family. It in the C-terminal section; belongs to the shikimate dehydrogenase family. As to quaternary structure, homodimer. Zn(2+) serves as cofactor.

The protein resides in the cytoplasm. The enzyme catalyses 7-phospho-2-dehydro-3-deoxy-D-arabino-heptonate = 3-dehydroquinate + phosphate. It carries out the reaction 3-dehydroquinate = 3-dehydroshikimate + H2O. It catalyses the reaction shikimate + NADP(+) = 3-dehydroshikimate + NADPH + H(+). The catalysed reaction is shikimate + ATP = 3-phosphoshikimate + ADP + H(+). The enzyme catalyses 3-phosphoshikimate + phosphoenolpyruvate = 5-O-(1-carboxyvinyl)-3-phosphoshikimate + phosphate. It functions in the pathway metabolic intermediate biosynthesis; chorismate biosynthesis; chorismate from D-erythrose 4-phosphate and phosphoenolpyruvate: step 2/7. Its pathway is metabolic intermediate biosynthesis; chorismate biosynthesis; chorismate from D-erythrose 4-phosphate and phosphoenolpyruvate: step 3/7. The protein operates within metabolic intermediate biosynthesis; chorismate biosynthesis; chorismate from D-erythrose 4-phosphate and phosphoenolpyruvate: step 4/7. It participates in metabolic intermediate biosynthesis; chorismate biosynthesis; chorismate from D-erythrose 4-phosphate and phosphoenolpyruvate: step 5/7. It functions in the pathway metabolic intermediate biosynthesis; chorismate biosynthesis; chorismate from D-erythrose 4-phosphate and phosphoenolpyruvate: step 6/7. Its function is as follows. The AROM polypeptide catalyzes 5 consecutive enzymatic reactions in prechorismate polyaromatic amino acid biosynthesis. The sequence is that of Pentafunctional AROM polypeptide from Uncinocarpus reesii (strain UAMH 1704).